Here is a 192-residue protein sequence, read N- to C-terminus: MKIGLFFGSFNPIHVGHLIIGNTMAETTDLDEVWYVVSPQNPFKKNQSLLHEFDRFDMVTAAIANNPKFRASDIEFSLPKPSYTVDTLTYISDKYPQHSFVLIIGEDNLDQFTNWKNHEQILHHYSLYVYPRPDSSNSFLREHKNVRLVAAPLLEISATYIRNLVKQEKSIRYLVSKEVEELILSRKYYSNY.

It belongs to the NadD family.

It carries out the reaction nicotinate beta-D-ribonucleotide + ATP + H(+) = deamido-NAD(+) + diphosphate. The protein operates within cofactor biosynthesis; NAD(+) biosynthesis; deamido-NAD(+) from nicotinate D-ribonucleotide: step 1/1. Its function is as follows. Catalyzes the reversible adenylation of nicotinate mononucleotide (NaMN) to nicotinic acid adenine dinucleotide (NaAD). This Cytophaga hutchinsonii (strain ATCC 33406 / DSM 1761 / CIP 103989 / NBRC 15051 / NCIMB 9469 / D465) protein is Probable nicotinate-nucleotide adenylyltransferase.